A 351-amino-acid chain; its full sequence is Translation initiation factor eIF2B subunit beta (351 aa).

The protein belongs to the eIF-2B alpha/beta/delta subunits family. As to quaternary structure, component of the translation initiation factor 2B (eIF2B) complex which is a heterodecamer of two sets of five different subunits: alpha, beta, gamma, delta and epsilon. Subunits alpha, beta and delta comprise a regulatory subcomplex and subunits epsilon and gamma comprise a catalytic subcomplex. Within the complex, the hexameric regulatory complex resides at the center, with the two heterodimeric catalytic subcomplexes bound on opposite sides.

The protein localises to the cytoplasm. The protein resides in the cytosol. Its activity is regulated as follows. Activated by the chemical integrated stress response (ISR) inhibitor ISRIB which stimulates guanine nucleotide exchange factor activity for both phosphorylated and unphosphorylated eIF2. Acts as a component of the translation initiation factor 2B (eIF2B) complex, which catalyzes the exchange of GDP for GTP on eukaryotic initiation factor 2 (eIF2) gamma subunit. Its guanine nucleotide exchange factor activity is repressed when bound to eIF2 complex phosphorylated on the alpha subunit, thereby limiting the amount of methionyl-initiator methionine tRNA available to the ribosome and consequently global translation is repressed. The chain is Translation initiation factor eIF2B subunit beta (EIF2B2) from Bos taurus (Bovine).